Here is a 473-residue protein sequence, read N- to C-terminus: Isocitrate dehydrogenase [NADP] (473 aa).

Thr104 serves as a coordination point for NADP(+). Residues Ser113, Asn115, Arg119, Arg129, and Arg153 each coordinate D-threo-isocitrate. Asp362 serves as a coordination point for Mg(2+). Residues His394–His400, Asn407, Tyr446, and Arg450 each bind NADP(+).

It belongs to the isocitrate and isopropylmalate dehydrogenases family. Homodimer. Mg(2+) serves as cofactor. Mn(2+) is required as a cofactor.

The catalysed reaction is D-threo-isocitrate + NADP(+) = 2-oxoglutarate + CO2 + NADPH. Its activity is regulated as follows. Inhibited by either oxaloacetate or glyoxylate. Also inhibited by the adenine nucleotides AMP, ADP and ATP and by NADPH, which inhibits the activity by 28% when it is added to the assay mixture at 0.25 mM. In terms of biological role, catalyzes the oxidative decarboxylation of isocitrate to 2-oxoglutarate and carbon dioxide with the concomitant reduction of NADP(+). The chain is Isocitrate dehydrogenase [NADP] from Nostoc sp. (strain PCC 7120 / SAG 25.82 / UTEX 2576).